The sequence spans 199 residues: ATP synthase subunit a (199 aa).

6 helical membrane passes run 2–22 (TNVY…LFYF), 25–45 (SMLG…FSYT), 53–73 (VISV…YFMY), 80–100 (MIEF…LTFI), 143–163 (VNVL…ELYL), and 164–184 (GIFY…VFFI).

It belongs to the ATPase A chain family. In terms of assembly, F-type ATPases have 2 components, CF(1) - the catalytic core - and CF(0) - the membrane proton channel. CF(1) has five subunits: alpha(3), beta(3), gamma(1), delta(1), epsilon(1). CF(0) has three main subunits: a, b and c.

The protein localises to the mitochondrion inner membrane. In terms of biological role, mitochondrial membrane ATP synthase (F(1)F(0) ATP synthase or Complex V) produces ATP from ADP in the presence of a proton gradient across the membrane which is generated by electron transport complexes of the respiratory chain. F-type ATPases consist of two structural domains, F(1) - containing the extramembraneous catalytic core and F(0) - containing the membrane proton channel, linked together by a central stalk and a peripheral stalk. During catalysis, ATP synthesis in the catalytic domain of F(1) is coupled via a rotary mechanism of the central stalk subunits to proton translocation. Key component of the proton channel; it may play a direct role in the translocation of protons across the membrane. This is ATP synthase subunit a (ATP6) from Ascaris suum (Pig roundworm).